Consider the following 288-residue polypeptide: Shikimate dehydrogenase (NADP(+)) (288 aa).

Shikimate contacts are provided by residues 21-23 (SLS) and T68. Residue K72 is the Proton acceptor of the active site. E84 serves as a coordination point for NADP(+). Residues N93 and D108 each coordinate shikimate. Residues 132 to 136 (GNGGA) and L230 each bind NADP(+). Y232 contacts shikimate. G253 serves as a coordination point for NADP(+).

It belongs to the shikimate dehydrogenase family. As to quaternary structure, homodimer.

The catalysed reaction is shikimate + NADP(+) = 3-dehydroshikimate + NADPH + H(+). It participates in metabolic intermediate biosynthesis; chorismate biosynthesis; chorismate from D-erythrose 4-phosphate and phosphoenolpyruvate: step 4/7. Its function is as follows. Involved in the biosynthesis of the chorismate, which leads to the biosynthesis of aromatic amino acids. Catalyzes the reversible NADPH linked reduction of 3-dehydroshikimate (DHSA) to yield shikimate (SA). This is Shikimate dehydrogenase (NADP(+)) from Gloeothece citriformis (strain PCC 7424) (Cyanothece sp. (strain PCC 7424)).